The following is a 661-amino-acid chain: Serine/threonine-protein phosphatase rdgC (661 aa).

Positions 7–32 constitute an IQ domain; that stretch reads RAAIFIQKWYRRHQARREMQRRCNWQ. Positions 105–413 are catalytic; the sequence is IDLLIDVFRK…HFVQYISAAS (309 aa). Mn(2+) contacts are provided by Asp-158, His-160, Asp-187, and Asn-219. Catalysis depends on His-220, which acts as the Proton donor. Mn(2+) is bound by residues His-271 and His-360. EF-hand domains follow at residues 441–476, 526–561, and 566–601; these read DHRD…VTKL, ANKA…LVAH, and YSKA…SDLH. Positions 539, 541, 543, 545, 550, 579, 581, 583, 585, and 590 each coordinate Ca(2+). Residues 606–625 form a disordered region; the sequence is QDENIRRRSTGRPSVAKTAT.

This sequence belongs to the PPP phosphatase family. Mn(2+) is required as a cofactor. Expressed in the visual system of the fly, as well as in the mushroom bodies of the central brain.

The catalysed reaction is O-phospho-L-seryl-[protein] + H2O = L-seryl-[protein] + phosphate. It carries out the reaction O-phospho-L-threonyl-[protein] + H2O = L-threonyl-[protein] + phosphate. Its function is as follows. Phosphatase required to prevent light-induced retinal degeneration. The sequence is that of Serine/threonine-protein phosphatase rdgC (rdgC) from Drosophila melanogaster (Fruit fly).